The chain runs to 958 residues: Coiled-coil domain-containing protein 80 (958 aa).

A signal peptide spans 1-21 (MNWMPALSLALLWTAWLVCGS). 5 disordered regions span residues 30 to 99 (RGSH…TRTR), 290 to 335 (VVED…TVRK), 358 to 396 (TATRATTRTVTTASRPTTTTTPLPTTQRTWTTKSHTTTE), 424 to 452 (ANRRDRQRGHPEKHLAATRKPSKGGRYES), and 467 to 617 (ASMS…QPPR). Residues 358–389 (TATRATTRTVTTASRPTTTTTPLPTTQRTWTT) show a composition bias toward low complexity. Composition is skewed to basic and acidic residues over residues 425–438 (NRRDRQRGHPEKHL) and 471–487 (RFKDNRTDRKDYNHRDL). A compositionally biased stretch (basic residues) spans 495–506 (KPTKTKPPKKKT). Composition is skewed to basic and acidic residues over residues 547–589 (KKHE…DKDR) and 597–606 (SRTENEDFPK).

Belongs to the CCDC80 family. In terms of assembly, binds to various extracellular matrix proteins.

It is found in the secreted. It localises to the extracellular space. Its subcellular location is the extracellular matrix. Its function is as follows. Promotes cell adhesion and matrix assembly. May play a role in eye formation. The chain is Coiled-coil domain-containing protein 80 (CCDC80) from Gallus gallus (Chicken).